The chain runs to 181 residues: Crossover junction endodeoxyribonuclease RuvC (181 aa).

Catalysis depends on residues Asp7, Glu67, and Asp139. Residues Asp7, Glu67, and Asp139 each contribute to the Mg(2+) site.

The protein belongs to the RuvC family. As to quaternary structure, homodimer which binds Holliday junction (HJ) DNA. The HJ becomes 2-fold symmetrical on binding to RuvC with unstacked arms; it has a different conformation from HJ DNA in complex with RuvA. In the full resolvosome a probable DNA-RuvA(4)-RuvB(12)-RuvC(2) complex forms which resolves the HJ. Requires Mg(2+) as cofactor.

It localises to the cytoplasm. The enzyme catalyses Endonucleolytic cleavage at a junction such as a reciprocal single-stranded crossover between two homologous DNA duplexes (Holliday junction).. The RuvA-RuvB-RuvC complex processes Holliday junction (HJ) DNA during genetic recombination and DNA repair. Endonuclease that resolves HJ intermediates. Cleaves cruciform DNA by making single-stranded nicks across the HJ at symmetrical positions within the homologous arms, yielding a 5'-phosphate and a 3'-hydroxyl group; requires a central core of homology in the junction. The consensus cleavage sequence is 5'-(A/T)TT(C/G)-3'. Cleavage occurs on the 3'-side of the TT dinucleotide at the point of strand exchange. HJ branch migration catalyzed by RuvA-RuvB allows RuvC to scan DNA until it finds its consensus sequence, where it cleaves and resolves the cruciform DNA. This chain is Crossover junction endodeoxyribonuclease RuvC, found in Ralstonia pickettii (strain 12J).